A 379-amino-acid polypeptide reads, in one-letter code: NAD-dependent protein deacetylase sirtuin-2 (379 aa).

The span at 1–10 shows a compositional bias: basic and acidic residues; it reads MSEEVSKRVE. The interval 1-32 is disordered; the sequence is MSEEVSKRVEEEADTPGLEGQSDDSSDEGDAS. The segment covering 21–32 has biased composition (acidic residues); that stretch reads QSDDSSDEGDAS. Residues 55 to 335 form the Deacetylase sirtuin-type domain; that stretch reads KVLDELTLDS…MTLAELLGWK (281 aa). NAD(+) contacts are provided by residues 83 to 87, 93 to 95, and 165 to 168; these read AGIST, DFR, and QNID. The active-site Proton acceptor is the H185. Zn(2+) is bound by residues C193, C198, C219, and C222. NAD(+)-binding positions include 260–261, 284–286, and C321; these read TS and NME. Basic and acidic residues predominate over residues 349–361; sequence IDSKDAKKTDKEA. The tract at residues 349–379 is disordered; sequence IDSKDAKKTDKEASQSSKSAVAEAEKTDKTE.

This sequence belongs to the sirtuin family. Class I subfamily. Zn(2+) serves as cofactor.

Its subcellular location is the cytoplasm. The protein resides in the nucleus. The catalysed reaction is N(6)-acetyl-L-lysyl-[protein] + NAD(+) + H2O = 2''-O-acetyl-ADP-D-ribose + nicotinamide + L-lysyl-[protein]. It carries out the reaction N(6)-tetradecanoyl-L-lysyl-[protein] + NAD(+) + H2O = 2''-O-tetradecanoyl-ADP-D-ribose + nicotinamide + L-lysyl-[protein]. The enzyme catalyses N(6)-hexadecanoyl-L-lysyl-[protein] + NAD(+) + H2O = 2''-O-hexadecanoyl-ADP-D-ribose + nicotinamide + L-lysyl-[protein]. NAD-dependent protein deacetylase, which deacetylates internal lysines on histone and alpha-tubulin as well as many other proteins such as key transcription factors. Participates in the modulation of multiple and diverse biological processes such as cell cycle control, genomic integrity, microtubule dynamics, cell differentiation, metabolic networks, and autophagy. Plays a major role in the control of cell cycle progression and genomic stability. Deacetylates histone H4 at 'Lys-16' (H4K16ac) at the VEGFA promoter. Thereby contributes to regulate expression of vegfa, a key regulator of angiogenesis. In addition to protein deacetylase activity, also has activity toward long-chain fatty acyl groups and mediates protein-lysine demyristoylation and depalmitoylation of target proteins. The polypeptide is NAD-dependent protein deacetylase sirtuin-2 (sirt2) (Danio rerio (Zebrafish)).